The chain runs to 588 residues: ATP-dependent lipid A-core flippase (588 aa).

Transmembrane regions (helical) follow at residues 23–43 (FWPV…IDAG), 56–76 (FITI…IGIT), 141–161 (DALT…TVMM), 162–182 (VICW…GIIV), 257–277 (LVIA…STVI), and 278–298 (TISA…IKPM). The region spanning 28–310 (LLGVLANILY…LTTLNATIQR (283 aa)) is the ABC transmembrane type-1 domain. The ABC transporter domain occupies 342-576 (IEFKHVYHAY…DGHYAQLYKV (235 aa)). 375 to 382 (GHSGSGKT) is an ATP binding site.

It belongs to the ABC transporter superfamily. Lipid exporter (TC 3.A.1.106) family. In terms of assembly, homodimer.

The protein localises to the cell inner membrane. The catalysed reaction is ATP + H2O + lipid A-core oligosaccharideSide 1 = ADP + phosphate + lipid A-core oligosaccharideSide 2.. Functionally, involved in lipopolysaccharide (LPS) biosynthesis. Translocates lipid A-core from the inner to the outer leaflet of the inner membrane. Transmembrane domains (TMD) form a pore in the inner membrane and the ATP-binding domain (NBD) is responsible for energy generation. This Legionella pneumophila (strain Paris) protein is ATP-dependent lipid A-core flippase.